The chain runs to 873 residues: Probable inorganic carbon transporter subunit DabA (873 aa).

Zn(2+) is bound by residues Cys-393, Asp-395, His-575, and Cys-590.

It belongs to the inorganic carbon transporter (TC 9.A.2) DabA family. As to quaternary structure, forms a complex with DabB. The cofactor is Zn(2+).

The protein localises to the cell membrane. Functionally, part of an energy-coupled inorganic carbon pump. This chain is Probable inorganic carbon transporter subunit DabA, found in Bacillus licheniformis (strain ATCC 14580 / DSM 13 / JCM 2505 / CCUG 7422 / NBRC 12200 / NCIMB 9375 / NCTC 10341 / NRRL NRS-1264 / Gibson 46).